Reading from the N-terminus, the 342-residue chain is Glucokinase (342 aa).

7–12 (GDIGGT) lines the ATP pocket.

The protein belongs to the bacterial glucokinase family.

It is found in the cytoplasm. The enzyme catalyses D-glucose + ATP = D-glucose 6-phosphate + ADP + H(+). This Nostoc sp. (strain PCC 7120 / SAG 25.82 / UTEX 2576) protein is Glucokinase.